We begin with the raw amino-acid sequence, 86 residues long: Small ribosomal subunit protein bS16 (86 aa).

The protein belongs to the bacterial ribosomal protein bS16 family.

The chain is Small ribosomal subunit protein bS16 from Methylacidiphilum infernorum (isolate V4) (Methylokorus infernorum (strain V4)).